Consider the following 451-residue polypeptide: Chromosomal replication initiator protein DnaA (451 aa).

The tract at residues 1–73 is domain I, interacts with DnaA modulators; it reads MNAHPKEIWE…IRSLQMVTSQ (73 aa). The segment at 73 to 112 is domain II; sequence QKYNVKFLISSELPEEFLTLDTINEQNIKGSIIVSDEMSA. The interval 113–329 is domain III, AAA+ region; the sequence is MLNPKYTFTS…GALIRIVAFS (217 aa). Residues G157, G159, K160, and T161 each coordinate ATP. Positions 330 to 451 are domain IV, binds dsDNA; that stretch reads SLTNKEISVD…NDLTKRLDQQ (122 aa).

This sequence belongs to the DnaA family. Oligomerizes as a right-handed, spiral filament on DNA at oriC.

Its subcellular location is the cytoplasm. In terms of biological role, plays an essential role in the initiation and regulation of chromosomal replication. ATP-DnaA binds to the origin of replication (oriC) to initiate formation of the DNA replication initiation complex once per cell cycle. Binds the DnaA box (a 9 base pair repeat at the origin) and separates the double-stranded (ds)DNA. Forms a right-handed helical filament on oriC DNA; dsDNA binds to the exterior of the filament while single-stranded (ss)DNA is stabiized in the filament's interior. The ATP-DnaA-oriC complex binds and stabilizes one strand of the AT-rich DNA unwinding element (DUE), permitting loading of DNA polymerase. After initiation quickly degrades to an ADP-DnaA complex that is not apt for DNA replication. Binds acidic phospholipids. The polypeptide is Chromosomal replication initiator protein DnaA (Clostridium kluyveri (strain NBRC 12016)).